The primary structure comprises 299 residues: MASSVWQTELPDLPEPKRGKVRDMYDLGDAYLMVATDRLSAFDVIMPDPIPDKGKVLTQISLFWFDVMKDIVDNHVLTAKVDEFPVKCRQYADILEGRSILVKKVQPQAIECVVRGYISGSGWSSYKKSQSVCGISLPEGLKESEKLPKTLFTPSTKAELGEHDENISFEKAAEIVGPETAEKLRDLSLAIYTKGADLANEKGIIIADTKFEFGTTDDGRIILIDEVLTPDSSRFWPKDQYEPGRAQDSFDKQFVRDYLLEIKFNKQPPGPKLPQEVLDKTRDKYLQALKLLAGDAYSI.

The protein belongs to the SAICAR synthetase family.

The enzyme catalyses 5-amino-1-(5-phospho-D-ribosyl)imidazole-4-carboxylate + L-aspartate + ATP = (2S)-2-[5-amino-1-(5-phospho-beta-D-ribosyl)imidazole-4-carboxamido]succinate + ADP + phosphate + 2 H(+). Its pathway is purine metabolism; IMP biosynthesis via de novo pathway; 5-amino-1-(5-phospho-D-ribosyl)imidazole-4-carboxamide from 5-amino-1-(5-phospho-D-ribosyl)imidazole-4-carboxylate: step 1/2. This Desulfatibacillum aliphaticivorans protein is Phosphoribosylaminoimidazole-succinocarboxamide synthase.